The sequence spans 145 residues: 3-dehydroquinate dehydratase 2 (145 aa).

Tyr22 acts as the Proton acceptor in catalysis. Residues Asn73, His79, and Asp86 each contribute to the substrate site. Residue His101 is the Proton donor of the active site. Substrate-binding positions include 102–103 (IS) and Arg112.

It belongs to the type-II 3-dehydroquinase family. As to quaternary structure, homododecamer.

It carries out the reaction 3-dehydroquinate = 3-dehydroshikimate + H2O. The protein operates within metabolic intermediate biosynthesis; chorismate biosynthesis; chorismate from D-erythrose 4-phosphate and phosphoenolpyruvate: step 3/7. Its function is as follows. Catalyzes a trans-dehydration via an enolate intermediate. The polypeptide is 3-dehydroquinate dehydratase 2 (aroQ2) (Corynebacterium efficiens (strain DSM 44549 / YS-314 / AJ 12310 / JCM 11189 / NBRC 100395)).